The following is a 528-amino-acid chain: Succinate-semialdehyde dehydrogenase, mitochondrial (528 aa).

The transit peptide at 1-34 (MVIGAAARVAIGGCRKLISSHTSLLLVSSQCRQM) directs the protein to the mitochondrion. Residue 196–198 (TPW) participates in NAD(+) binding. Arginine 207 lines the substrate pocket. NAD(+) is bound by residues 222–225 (KPSE), 275–280 (GSTAVG), and glutamate 297. Glutamate 297 (proton acceptor) is an active-site residue. Substrate is bound at residue arginine 325. Cysteine 331 (nucleophile) is an active-site residue. A disulfide bridge connects residues cysteine 331 and cysteine 333. An NAD(+)-binding site is contributed by 428–430 (EIF). Serine 488 serves as a coordination point for substrate.

The protein belongs to the aldehyde dehydrogenase family. Homotetramer. Expressed in developing leaf tissues.

It localises to the mitochondrion matrix. The enzyme catalyses succinate semialdehyde + NAD(+) + H2O = succinate + NADH + 2 H(+). Its pathway is amino-acid degradation; 4-aminobutanoate degradation. Competitive inhibition by NADH. Inhibited by ATP, ADP and AMP. Redox-regulated. Inhibited under oxydizing conditions. Oxidizes specifically succinate semialdehyde. Involved in plant response to environmental stress by preventing the accumulation of reactive oxygen species, probably by regulating proline, gamma-hydroxybutyrate (GHB) and gamma-aminobutyrate (GABA) levels. Required for the maintenance of the shoot apical meristem (SAM) structure and subsequent adaxial-abaxial axis-dependent development of cotyledons and leaves. The chain is Succinate-semialdehyde dehydrogenase, mitochondrial from Arabidopsis thaliana (Mouse-ear cress).